The primary structure comprises 156 residues: Cyanate hydratase (156 aa).

Residues Arg96, Glu99, and Ser122 contribute to the active site.

This sequence belongs to the cyanase family.

The enzyme catalyses cyanate + hydrogencarbonate + 3 H(+) = NH4(+) + 2 CO2. Catalyzes the reaction of cyanate with bicarbonate to produce ammonia and carbon dioxide. The polypeptide is Cyanate hydratase (Burkholderia ambifaria (strain MC40-6)).